A 320-amino-acid polypeptide reads, in one-letter code: o-succinylbenzoate synthase (320 aa).

Residue lysine 133 is the Proton donor of the active site. The Mg(2+) site is built by aspartate 161, glutamate 190, and aspartate 213. The active-site Proton acceptor is the lysine 235.

The protein belongs to the mandelate racemase/muconate lactonizing enzyme family. MenC type 1 subfamily. Requires a divalent metal cation as cofactor.

The catalysed reaction is (1R,6R)-6-hydroxy-2-succinyl-cyclohexa-2,4-diene-1-carboxylate = 2-succinylbenzoate + H2O. It functions in the pathway quinol/quinone metabolism; 1,4-dihydroxy-2-naphthoate biosynthesis; 1,4-dihydroxy-2-naphthoate from chorismate: step 4/7. The protein operates within quinol/quinone metabolism; menaquinone biosynthesis. Converts 2-succinyl-6-hydroxy-2,4-cyclohexadiene-1-carboxylate (SHCHC) to 2-succinylbenzoate (OSB). The protein is o-succinylbenzoate synthase of Shigella flexneri.